An 84-amino-acid chain; its full sequence is Cytochrome b559 subunit alpha (84 aa).

Residues 22-36 (IIHIPAITILFASGF) form a helical membrane-spanning segment. Residue H24 coordinates heme.

It belongs to the PsbE/PsbF family. As to quaternary structure, heterodimer of an alpha subunit and a beta subunit. PSII is composed of 1 copy each of membrane proteins PsbA, PsbB, PsbC, PsbD, PsbE, PsbF, PsbH, PsbI, PsbJ, PsbK, PsbL, PsbM, PsbT, PsbX, Psb30/Ycf12, peripheral proteins PsbO, CyanoQ (PsbQ), PsbU, PsbV and a large number of cofactors. It forms dimeric complexes. It depends on heme b as a cofactor.

It is found in the cell inner membrane. This b-type cytochrome is tightly associated with the reaction center of photosystem II (PSII). PSII is a light-driven water:plastoquinone oxidoreductase that uses light energy to abstract electrons from H(2)O, generating O(2) and a proton gradient subsequently used for ATP formation. It consists of a core antenna complex that captures photons, and an electron transfer chain that converts photonic excitation into a charge separation. The polypeptide is Cytochrome b559 subunit alpha (Gloeobacter violaceus (strain ATCC 29082 / PCC 7421)).